Reading from the N-terminus, the 99-residue chain is MKIKLTDQAVEWFKDELDLPENNKVLQFYVRYGGEFQLKQGFSPAFRVEPREDVEIGYEENYNDLILVVSEEDLWYFEDNEVLVEKVDHDDEIAYSKLK.

It belongs to the HesB/IscA family.

This is an uncharacterized protein from Staphylococcus haemolyticus (strain JCSC1435).